The primary structure comprises 474 residues: tRNA-2-methylthio-N(6)-dimethylallyladenosine synthase (474 aa).

Residues 3-120 form the MTTase N-terminal domain; it reads KKLHIKTWGC…LPEMINSVRG (118 aa). [4Fe-4S] cluster-binding residues include Cys12, Cys49, Cys83, Cys157, Cys161, and Cys164. Positions 143 to 375 constitute a Radical SAM core domain; the sequence is RAEGPTAFVS…QERINQQAMA (233 aa). One can recognise a TRAM domain in the interval 378-441; it reads RRMLGTTQRI…PNSLRGKVVR (64 aa).

This sequence belongs to the methylthiotransferase family. MiaB subfamily. Monomer. It depends on [4Fe-4S] cluster as a cofactor.

Its subcellular location is the cytoplasm. It catalyses the reaction N(6)-dimethylallyladenosine(37) in tRNA + (sulfur carrier)-SH + AH2 + 2 S-adenosyl-L-methionine = 2-methylsulfanyl-N(6)-dimethylallyladenosine(37) in tRNA + (sulfur carrier)-H + 5'-deoxyadenosine + L-methionine + A + S-adenosyl-L-homocysteine + 2 H(+). Its function is as follows. Catalyzes the methylthiolation of N6-(dimethylallyl)adenosine (i(6)A), leading to the formation of 2-methylthio-N6-(dimethylallyl)adenosine (ms(2)i(6)A) at position 37 in tRNAs that read codons beginning with uridine. In Shigella boydii serotype 4 (strain Sb227), this protein is tRNA-2-methylthio-N(6)-dimethylallyladenosine synthase.